Consider the following 627-residue polypeptide: Interferon-induced GTP-binding protein MxB (627 aa).

One can recognise a Dynamin-type G domain in the interval 34–307 (DLALPAIAVI…LVHHIQRSLP (274 aa)). The interval 44 to 51 (GDQSSGKS) is G1 motif. 44–51 (GDQSSGKS) lines the GTP pocket. The G2 motif stretch occupies residues 69–71 (VTR). The segment at 145-148 (DLPG) is G3 motif. GTP contacts are provided by residues 145-149 (DLPGI) and 214-217 (TKPD). The segment at 214–217 (TKPD) is G4 motif. The G5 motif stretch occupies residues 246 to 249 (RCRG). Residues 541–627 (LSEMKLHLES…MKAQNLLATY (87 aa)) enclose the GED domain.

It belongs to the TRAFAC class dynamin-like GTPase superfamily. Dynamin/Fzo/YdjA family.

Its subcellular location is the cytoplasm. The chain is Interferon-induced GTP-binding protein MxB (mxb) from Danio rerio (Zebrafish).